Reading from the N-terminus, the 367-residue chain is Phosphoribosylaminoimidazole-succinocarboxamide synthase (367 aa).

This sequence belongs to the SAICAR synthetase family.

The enzyme catalyses 5-amino-1-(5-phospho-D-ribosyl)imidazole-4-carboxylate + L-aspartate + ATP = (2S)-2-[5-amino-1-(5-phospho-beta-D-ribosyl)imidazole-4-carboxamido]succinate + ADP + phosphate + 2 H(+). The protein operates within purine metabolism; IMP biosynthesis via de novo pathway; 5-amino-1-(5-phospho-D-ribosyl)imidazole-4-carboxamide from 5-amino-1-(5-phospho-D-ribosyl)imidazole-4-carboxylate: step 1/2. The sequence is that of Phosphoribosylaminoimidazole-succinocarboxamide synthase from Shewanella amazonensis (strain ATCC BAA-1098 / SB2B).